Reading from the N-terminus, the 304-residue chain is CRISPR-associated endonuclease Cas1 (304 aa).

Residues Glu148, His204, and Glu219 each coordinate Mn(2+).

It belongs to the CRISPR-associated endonuclease Cas1 family. As to quaternary structure, homodimer, forms a heterotetramer with a Cas2 homodimer. It depends on Mg(2+) as a cofactor. The cofactor is Mn(2+).

Its function is as follows. CRISPR (clustered regularly interspaced short palindromic repeat), is an adaptive immune system that provides protection against mobile genetic elements (viruses, transposable elements and conjugative plasmids). CRISPR clusters contain spacers, sequences complementary to antecedent mobile elements, and target invading nucleic acids. CRISPR clusters are transcribed and processed into CRISPR RNA (crRNA). Acts as a dsDNA endonuclease. Involved in the integration of spacer DNA into the CRISPR cassette. The polypeptide is CRISPR-associated endonuclease Cas1 (Neisseria meningitidis serogroup C (strain 8013)).